A 476-amino-acid polypeptide reads, in one-letter code: Zinc metalloproteinase/disintegrin (476 aa).

A signal peptide spans Met-1–Ser-20. Positions Ile-21–Gln-192 are excised as a propeptide. Pyrrolidone carboxylic acid is present on Gln-193. The region spanning Arg-198 to Pro-393 is the Peptidase M12B domain. Ca(2+) is bound by residues Glu-201 and Asp-285. Intrachain disulfides connect Cys-309/Cys-388, Cys-348/Cys-372, and Cys-350/Cys-355. His-334 lines the Zn(2+) pocket. The active site involves Glu-335. His-338 and His-344 together coordinate Zn(2+). Ca(2+) contacts are provided by Cys-388 and Asn-391. The propeptide occupies Leu-394–Leu-403. One can recognise a Disintegrin domain in the interval Thr-395 to Ala-476. Intrachain disulfides connect Cys-409-Cys-424, Cys-411-Cys-419, Cys-418-Cys-441, Cys-432-Cys-438, Cys-437-Cys-462, and Cys-450-Cys-469. The Cell attachment site signature appears at Arg-454–Asp-456.

The protein belongs to the venom metalloproteinase (M12B) family. P-II subfamily. P-IIa sub-subfamily. As to quaternary structure, monomer (metalloprotease). Zn(2+) is required as a cofactor. The N-terminus is blocked. Post-translationally, not glycosylated. Expressed by the venom gland.

The protein localises to the secreted. Inhibited by EDTA, and 1,10-phenanthroline, but not by PMSF. In terms of biological role, non-hemorrhagic proteinase that activates prothrombin (F2) calcium-independently. Activates factor X (F10) and hydrolyzes the Aalpha-chain and more slowly the Bbeta-chain of fibrin and fibrinogen without affecting the gamma chain. It induces neither detachment nor apoptosis of human endothelial cells and is also not able to trigger an endothelial pro-inflammatory cell response. Nitric oxide and prostacyclin levels released by endothelial cells are significantly increased after treatment with insularinase A. Inhibits ADP-induced platelet aggregation (IC(50)=0.8 uM for native protein). Interestingly, inhibits the adhesion of HUVECs to immobilized fibrinogen at very low concentrations (IC(50)=36 nM). This Bothrops insularis (Golden lancehead) protein is Zinc metalloproteinase/disintegrin.